The sequence spans 286 residues: Bifunctional protein FolD (286 aa).

NADP(+) is bound by residues glycine 165–serine 167, serine 190, and valine 231.

The protein belongs to the tetrahydrofolate dehydrogenase/cyclohydrolase family. As to quaternary structure, homodimer.

The enzyme catalyses (6R)-5,10-methylene-5,6,7,8-tetrahydrofolate + NADP(+) = (6R)-5,10-methenyltetrahydrofolate + NADPH. It catalyses the reaction (6R)-5,10-methenyltetrahydrofolate + H2O = (6R)-10-formyltetrahydrofolate + H(+). It functions in the pathway one-carbon metabolism; tetrahydrofolate interconversion. Catalyzes the oxidation of 5,10-methylenetetrahydrofolate to 5,10-methenyltetrahydrofolate and then the hydrolysis of 5,10-methenyltetrahydrofolate to 10-formyltetrahydrofolate. This chain is Bifunctional protein FolD, found in Bacillus cereus (strain ATCC 14579 / DSM 31 / CCUG 7414 / JCM 2152 / NBRC 15305 / NCIMB 9373 / NCTC 2599 / NRRL B-3711).